We begin with the raw amino-acid sequence, 370 residues long: Quinolinate synthase (370 aa).

Positions 62 and 83 each coordinate iminosuccinate. A [4Fe-4S] cluster-binding site is contributed by C128. Residues 154–156 (YAN) and S171 each bind iminosuccinate. A [4Fe-4S] cluster-binding site is contributed by C215. Iminosuccinate contacts are provided by residues 241–243 (HPE) and T258. C312 is a [4Fe-4S] cluster binding site.

The protein belongs to the quinolinate synthase family. Type 1 subfamily. [4Fe-4S] cluster is required as a cofactor.

The protein localises to the cytoplasm. It carries out the reaction iminosuccinate + dihydroxyacetone phosphate = quinolinate + phosphate + 2 H2O + H(+). It participates in cofactor biosynthesis; NAD(+) biosynthesis; quinolinate from iminoaspartate: step 1/1. Catalyzes the condensation of iminoaspartate with dihydroxyacetone phosphate to form quinolinate. The polypeptide is Quinolinate synthase (Neisseria meningitidis serogroup C (strain 053442)).